The primary structure comprises 450 residues: Proline--tRNA ligase (450 aa).

This sequence belongs to the class-II aminoacyl-tRNA synthetase family. ProS type 2 subfamily. In terms of assembly, homodimer.

The protein localises to the cytoplasm. It catalyses the reaction tRNA(Pro) + L-proline + ATP = L-prolyl-tRNA(Pro) + AMP + diphosphate. Catalyzes the attachment of proline to tRNA(Pro) in a two-step reaction: proline is first activated by ATP to form Pro-AMP and then transferred to the acceptor end of tRNA(Pro). The sequence is that of Proline--tRNA ligase from Paracoccus denitrificans (strain Pd 1222).